The sequence spans 444 residues: Aflatoxin biosynthesis regulatory protein (444 aa).

A disordered region spans residues M1–L25. Residues C29–C56 constitute a DNA-binding region (zn(2)-C6 fungal-type). Residues M64–S174 form a disordered region. Residues T106 to P116 show a composition bias toward basic residues. Residues P120–P130 show a composition bias toward low complexity. The segment covering P136 to Q149 has biased composition (polar residues).

Interacts with aflS.

The protein localises to the nucleus. Functionally, transcription factor; part of the gene cluster that mediates the biosynthesis of aflatoxin, a polyketide-derived furanocoumarin which is part of the most toxic and carcinogenic compounds among the known mycotoxins. Binds to at least 17 genes in the aflatoxin biosynthetic cluster, leading to the activation of an enzymatic cascade reaction that results in aflatoxin biosynthesis. Promoter regions of several biosynthesis genes are bound by aflR in a dimeric form with a 5'-TCG(N5)CGA-3' binding motif. AflR also recognizes 5'-TTAGGCCTAA-3' and 5'-TCGCAGCCCGG-3' binding sequences. AflR achieves its binding specificity through a mechanism in which either two copies of aflR or its complex with aflS bind to target sites on DNA in a highly cooperative manner. AflS acts as a modulator of aflR's DNA-binding by decreasing its DNA-binding affinity. In addition to aflatoxin biosynthesis, also plays a positive role in the fungal growth, spore germination, sclerotial development, and carbohydrate metabolism. The sequence is that of Aflatoxin biosynthesis regulatory protein from Aspergillus flavus (strain ATCC 200026 / FGSC A1120 / IAM 13836 / NRRL 3357 / JCM 12722 / SRRC 167).